The sequence spans 505 residues: Histidine ammonia-lyase (505 aa).

The 5-imidazolinone (Ala-Gly) cross-link spans 141 to 143; it reads ASG. S142 bears the 2,3-didehydroalanine (Ser) mark.

This sequence belongs to the PAL/histidase family. In terms of processing, contains an active site 4-methylidene-imidazol-5-one (MIO), which is formed autocatalytically by cyclization and dehydration of residues Ala-Ser-Gly.

The protein resides in the cytoplasm. It carries out the reaction L-histidine = trans-urocanate + NH4(+). Its pathway is amino-acid degradation; L-histidine degradation into L-glutamate; N-formimidoyl-L-glutamate from L-histidine: step 1/3. The chain is Histidine ammonia-lyase from Bacillus anthracis.